A 338-amino-acid polypeptide reads, in one-letter code: tRNA N6-adenosine threonylcarbamoyltransferase (338 aa).

3 residues coordinate Fe cation: H110, H114, and Y131. Residues Y131–G135, D163, D184, and N268 each bind substrate. D296 provides a ligand contact to Fe cation.

It belongs to the KAE1 / TsaD family. The cofactor is Fe(2+).

The protein resides in the cytoplasm. It carries out the reaction L-threonylcarbamoyladenylate + adenosine(37) in tRNA = N(6)-L-threonylcarbamoyladenosine(37) in tRNA + AMP + H(+). Functionally, required for the formation of a threonylcarbamoyl group on adenosine at position 37 (t(6)A37) in tRNAs that read codons beginning with adenine. Is probably involved in the transfer of the threonylcarbamoyl moiety of threonylcarbamoyl-AMP (TC-AMP) to the N6 group of A37. This Staphylothermus marinus (strain ATCC 43588 / DSM 3639 / JCM 9404 / F1) protein is tRNA N6-adenosine threonylcarbamoyltransferase.